The chain runs to 173 residues: NADH-quinone oxidoreductase subunit B (173 aa).

[4Fe-4S] cluster contacts are provided by Cys-52, Cys-53, Cys-117, and Cys-147.

This sequence belongs to the complex I 20 kDa subunit family. As to quaternary structure, NDH-1 is composed of 14 different subunits. Subunits NuoB, C, D, E, F, and G constitute the peripheral sector of the complex. [4Fe-4S] cluster is required as a cofactor.

The protein localises to the cell inner membrane. The enzyme catalyses a quinone + NADH + 5 H(+)(in) = a quinol + NAD(+) + 4 H(+)(out). Its function is as follows. NDH-1 shuttles electrons from NADH, via FMN and iron-sulfur (Fe-S) centers, to quinones in the respiratory chain. Couples the redox reaction to proton translocation (for every two electrons transferred, four hydrogen ions are translocated across the cytoplasmic membrane), and thus conserves the redox energy in a proton gradient. The chain is NADH-quinone oxidoreductase subunit B from Pelagibacter ubique (strain HTCC1062).